Reading from the N-terminus, the 226-residue chain is Pathogenesis-related protein R minor form (226 aa).

A signal peptide spans 1-25 (MNFLKSFPFYAFLCFGQYFVAVTHA). 8 disulfides stabilise this stretch: Cys-34-Cys-225, Cys-75-Cys-85, Cys-90-Cys-96, Cys-140-Cys-214, Cys-145-Cys-197, Cys-153-Cys-163, Cys-167-Cys-176, and Cys-177-Cys-184.

It belongs to the thaumatin family.

The protein resides in the vacuole. The sequence is that of Pathogenesis-related protein R minor form from Nicotiana tabacum (Common tobacco).